A 320-amino-acid chain; its full sequence is MRSAQVYRWQIPMDAGVVLRDRRLKTRDGLYVRLCDGEREGWGEISPLPGFSQETLEEAQAALLDWVNGWLQGQSTLPEVPSVAFGVSCALAEAAGTLPEAADYRAAPLCTGDPDDLVLQLADMPGEKVAKIKVGLYEAVRDGMVVNLLLEAVPDLHLRLDANRAWTPLKAQQFAKYVNPDYRARIAFLEEPCKTRDDSRAFARETGIAIAWDESLREDDFVFAAEAGVSAVVIKPTLTGSLEKVREQVQAAHTLGLTAVISSSIESSLGLTQLARIAAWLTPQTIPGLDTLSLMQTQQVRRWPGSALPCVSDDALERLL.

Lysine 133 (proton donor) is an active-site residue. 3 residues coordinate Mg(2+): aspartate 161, glutamate 190, and aspartate 213. Catalysis depends on lysine 235, which acts as the Proton acceptor.

Belongs to the mandelate racemase/muconate lactonizing enzyme family. MenC type 1 subfamily. It depends on a divalent metal cation as a cofactor.

The catalysed reaction is (1R,6R)-6-hydroxy-2-succinyl-cyclohexa-2,4-diene-1-carboxylate = 2-succinylbenzoate + H2O. It functions in the pathway quinol/quinone metabolism; 1,4-dihydroxy-2-naphthoate biosynthesis; 1,4-dihydroxy-2-naphthoate from chorismate: step 4/7. Its pathway is quinol/quinone metabolism; menaquinone biosynthesis. Converts 2-succinyl-6-hydroxy-2,4-cyclohexadiene-1-carboxylate (SHCHC) to 2-succinylbenzoate (OSB). This Citrobacter koseri (strain ATCC BAA-895 / CDC 4225-83 / SGSC4696) protein is o-succinylbenzoate synthase.